The chain runs to 20 residues: Expansin-B (20 aa).

The disordered stretch occupies residues 1–20; the sequence is GPPKVAPGKXISASFGGEWL.

It belongs to the expansin family. Expansin B subfamily.

Its subcellular location is the secreted. It localises to the cell wall. It is found in the membrane. Its function is as follows. May aid fertilization by loosening the cell wall of the stigma and style, thereby facilitating penetration of the pollen tube. Acts selectively on grass cell walls, which are relatively poor in pectins and xyloglucans and rich in glucuronoarabinoxylans and (1-3),(1-4)-beta-D-glucans, when compared with cell walls of other angiosperms, including other monocots. In Paspalum notatum (Bahia grass), this protein is Expansin-B.